We begin with the raw amino-acid sequence, 148 residues long: MKGYSMSVDENNARARIVEADISLKDAVNIAHHIRGMKLDYAKQILEDVVSKKYAIPYFRYLDSVSHRPGKGPGRYPVKAAKVFIDLLSNVENNAEFKGMNTDSLIIKHVAANKGRMIKKYTPKAYGRAGANFKDLINLEVIVTEGDQ.

Belongs to the universal ribosomal protein uL22 family. In terms of assembly, part of the 50S ribosomal subunit.

Its function is as follows. This protein binds specifically to 23S rRNA. It makes multiple contacts with different domains of the 23S rRNA in the assembled 50S subunit and ribosome. Functionally, the globular domain of the protein is located near the polypeptide exit tunnel on the outside of the subunit, while an extended beta-hairpin is found that lines the wall of the exit tunnel in the center of the 70S ribosome. This chain is Large ribosomal subunit protein uL22, found in Thermoplasma volcanium (strain ATCC 51530 / DSM 4299 / JCM 9571 / NBRC 15438 / GSS1).